The chain runs to 196 residues: Ribonuclease HII (196 aa).

The region spanning 9–196 is the RNase H type-2 domain; sequence NLIAGVDEVG…APVKRALNLV (188 aa). A divalent metal cation contacts are provided by D15, E16, and D107.

This sequence belongs to the RNase HII family. Mn(2+) serves as cofactor. It depends on Mg(2+) as a cofactor.

The protein resides in the cytoplasm. It carries out the reaction Endonucleolytic cleavage to 5'-phosphomonoester.. Functionally, endonuclease that specifically degrades the RNA of RNA-DNA hybrids. The chain is Ribonuclease HII from Proteus mirabilis (strain HI4320).